The primary structure comprises 416 residues: MFADLDYDIEEDKLGIPTVPGKVTLQKDAQNLIGISIGGGAQYCPCLYIVQVFDNTPAALDGTVAAGDEITGVNGKSIKGKTKVEVAKMIQEVKGEVTIHYNKLQADPKQGMSLDIVLKKVKHRLVENMSSGTADALGLSRAILCNDGLVKRLEELERTAELYKGMTEHTKNLLRAFYELSQTHRAFGDVFSVIGVREPQPAASEAFVKFADAHRSIEKFGIRLLKTIKPMLTDLNTYLNKAIPDTRLTIKKYLDVKFEYLSYCLKVKEMDDEEYSCIGPRRALYRVSTGNYEYRLILRCRQEARARFSQMRKDVLEKMELLDQKHVQDIVFQLQRFVSTMSKYYNDCYAVLQDADVFPIEVDLAHTTLAYGPNQGSFTDGEEEDEEEEDGAAREVSKDACGATGPTDKGGSWCDS.

Residues 22-105 enclose the PDZ domain; it reads KVTLQKDAQN…EVTIHYNKLQ (84 aa). Residues cysteine 44 and cysteine 46 each contribute to the Zn(2+) site. At threonine 82 the chain carries Phosphothreonine. Residues 144–357 enclose the AH domain; it reads LCNDGLVKRL…CYAVLQDADV (214 aa). The segment at 373–416 is disordered; that stretch reads PNQGSFTDGEEEDEEEEDGAAREVSKDACGATGPTDKGGSWCDS. Acidic residues predominate over residues 380 to 390; sequence DGEEEDEEEED. Cysteine 414 carries S-palmitoyl cysteine; by DHHC8 lipidation.

Monomer and homodimer. Interacts with CXADR. Interacts presynaptically with the glutamate receptors GRIA2, GRIA3, GRIK3, isoform 3 of GRIA4, isoform A of GRM4, GRM7 and GRM8; with NAPA and NAPB; and with BTG2. The interaction with NAPA and NAPB disrupts the interaction with GRIA2, conducting to the internalization of GRIA2. Interacts with PRKCA; with the amine transporters SLC6A2 and SLC6A3; with the channels ASIC1 and ASIC2; with the GTP-binding proteins ARF1 and ARF3; with the ephrin receptor tyrosine kinases EPHA7, EPHB1 and EPHB2; with ERBB2 and through its PDZ domain with the C-terminal tail of PRLHR. Interacts with UNC5A. Interacts (via AH domain) with NCS1/FREQ; in a calcium-dependent manner. Interacts with F-actin and associates with the ARP2/3 complex. Interacts (via PDZ domain) with ARF1 (activated); the interaction blocks Arp2/3 complex inhibition. Interacts with SORCS3. Phosphorylation at Thr-82 appears to inhibit the interaction with AMPA receptors. Phosphorylated on tyrosine residues by EPHB2 and on serine or threonine residues by PKC. Post-translationally, palmitoylation on Cys-414 is essential for long-term synaptic depression (LTD). As to expression, expressed in all tissues examined, with highest levels in brain and testes and lowest levels in lung.

The protein resides in the cytoplasm. Its subcellular location is the perinuclear region. It is found in the membrane. The protein localises to the postsynaptic density. It localises to the synapse. The protein resides in the synaptosome. Its subcellular location is the cytoskeleton. Functionally, probable adapter protein that bind to and organize the subcellular localization of a variety of membrane proteins containing some PDZ recognition sequence. Involved in the clustering of various receptors, possibly by acting at the receptor internalization level. Plays a role in synaptic plasticity by regulating the trafficking and internalization of AMPA receptors. May be regulated upon PRKCA activation. May regulate ASIC1/ASIC3 channel. Regulates actin polymerization by inhibiting the actin-nucleating activity of the Arp2/3 complex; the function is competitive with nucleation promoting factors and is linked to neuronal morphology regulation and AMPA receptor (AMPAR) endocytosis. Via interaction with the Arp2/3 complex involved in regulation of synaptic plasicity of excitatory synapses and required for spine shrinkage during long-term depression (LTD). Involved in regulation of astrocyte morphology, antagonistic to Arp2/3 complex activator WASL/N-WASP function. This Mus musculus (Mouse) protein is PRKCA-binding protein (Pick1).